We begin with the raw amino-acid sequence, 842 residues long: Leucine--tRNA ligase (842 aa).

Positions 44 to 55 (PYPSANGLHVGH) match the 'HIGH' region motif. Residues 619 to 623 (KMSKS) carry the 'KMSKS' region motif. ATP is bound at residue lysine 622.

The protein belongs to the class-I aminoacyl-tRNA synthetase family.

Its subcellular location is the cytoplasm. The enzyme catalyses tRNA(Leu) + L-leucine + ATP = L-leucyl-tRNA(Leu) + AMP + diphosphate. The protein is Leucine--tRNA ligase of Borrelia turicatae (strain 91E135).